The primary structure comprises 1270 residues: Breakpoint cluster region protein (1270 aa).

Residues 28–55 (VGDIEQELERCKASIRRLEQEVNQERFR) are a coiled coil. 4 disordered regions span residues 67-173 (KKSY…SADA), 201-249 (ISSL…DYED), 295-396 (KSPL…RHRQ), and 412-484 (TGQI…LEPT). The span at 126-139 (GRPATARRPAAAAP) shows a compositional bias: low complexity. 2 positions are modified to phosphoserine: Ser-216 and Ser-237. The residue at position 247 (Tyr-247) is a Phosphotyrosine. Low complexity-rich tracts occupy residues 348–358 (SSGQSSRVSPS) and 371–384 (SPSQ…DSSS). 3 positions are modified to phosphoserine: Ser-358, Ser-379, and Ser-384. Thr-387 carries the post-translational modification Phosphothreonine. Phosphoserine is present on residues Ser-461 and Ser-465. At Arg-473 the chain carries Omega-N-methylarginine. Phosphoserine is present on residues Ser-475 and Ser-487. The 194-residue stretch at 497–690 (MRKWVLSGIL…QNFLSSINEE (194 aa)) folds into the DH domain. Tyr-553 is subject to Phosphotyrosine. The residue at position 640 (Thr-640) is a Phosphothreonine. Tyr-643 is modified (phosphotyrosine). Thr-692 carries the post-translational modification Phosphothreonine. Residues 707-865 (QLLKDSFMVE…WRESIREQQK (159 aa)) form the PH domain. The C2 domain maps to 892–1019 (HHIPLTINKE…QDRDWQRTVI (128 aa)). Residues 1053–1247 (VKIAVVTKRE…VMSQVQVLLY (195 aa)) enclose the Rho-GAP domain. Ser-1263 carries the post-translational modification Phosphoserine.

In terms of assembly, homotetramer. Interacts with PDZK1. May interact with CCPG1. Interacts with HCK, FES/FPS, ABL1, PIK3R1 and GRB2. Interacts with SH2D5. Interacts with DLG4. In terms of processing, autophosphorylated. Phosphorylated by FES/FPS on tyrosine residues, leading to down-regulation of the BCR kinase activity. Phosphorylation by HCK is important for interaction with GRB2. As to expression, expressed in brain, including the cortex, hippocampus, cerebellum, and brainstem, as well as the spinal cord (at protein level).

The protein localises to the postsynaptic density. Its subcellular location is the cell projection. The protein resides in the dendritic spine. It is found in the axon. It localises to the synapse. It catalyses the reaction L-seryl-[protein] + ATP = O-phospho-L-seryl-[protein] + ADP + H(+). It carries out the reaction L-threonyl-[protein] + ATP = O-phospho-L-threonyl-[protein] + ADP + H(+). Functionally, protein with a unique structure having two opposing regulatory activities toward small GTP-binding proteins. The C-terminus is a GTPase-activating protein (GAP) domain which stimulates GTP hydrolysis by RAC1, RAC2 and CDC42. Accelerates the intrinsic rate of GTP hydrolysis of RAC1 or CDC42, leading to down-regulation of the active GTP-bound form. The central Dbl homology (DH) domain functions as guanine nucleotide exchange factor (GEF) that modulates the GTPases CDC42, RHOA and RAC1. Promotes the conversion of CDC42, RHOA and RAC1 from the GDP-bound to the GTP-bound form. The amino terminus contains an intrinsic kinase activity. Functions as an important negative regulator of neuronal RAC1 activity. Regulates macrophage functions such as CSF1-directed motility and phagocytosis through the modulation of RAC1 activity. Plays a major role as a RHOA GEF in keratinocytes being involved in focal adhesion formation and keratinocyte differentiation. This chain is Breakpoint cluster region protein, found in Rattus norvegicus (Rat).